Consider the following 284-residue polypeptide: D-tagatose-1,6-bisphosphate aldolase subunit GatY (284 aa).

Aspartate 82 serves as the catalytic Proton donor. Zn(2+)-binding residues include histidine 83 and histidine 180. Glycine 181 contributes to the dihydroxyacetone phosphate binding site. A Zn(2+)-binding site is contributed by histidine 208. Dihydroxyacetone phosphate-binding positions include 209 to 211 and 230 to 233; these read GAS and NVAT.

This sequence belongs to the class II fructose-bisphosphate aldolase family. TagBP aldolase GatY subfamily. As to quaternary structure, forms a complex with GatZ. The cofactor is Zn(2+).

It carries out the reaction D-tagatofuranose 1,6-bisphosphate = D-glyceraldehyde 3-phosphate + dihydroxyacetone phosphate. It participates in carbohydrate metabolism; D-tagatose 6-phosphate degradation; D-glyceraldehyde 3-phosphate and glycerone phosphate from D-tagatose 6-phosphate: step 2/2. Functionally, catalytic subunit of the tagatose-1,6-bisphosphate aldolase GatYZ, which catalyzes the reversible aldol condensation of dihydroxyacetone phosphate (DHAP or glycerone-phosphate) with glyceraldehyde 3-phosphate (G3P) to produce tagatose 1,6-bisphosphate (TBP). Requires GatZ subunit for full activity and stability. Is involved in the catabolism of galactitol. The sequence is that of D-tagatose-1,6-bisphosphate aldolase subunit GatY from Salmonella paratyphi B (strain ATCC BAA-1250 / SPB7).